The sequence spans 51 residues: MGSNKPLGKKVRLAKALKQNRRVPLFVIVKTRGRVRFHPKMRYWRRKKLKA.

It belongs to the eukaryotic ribosomal protein eL39 family.

The chain is Large ribosomal subunit protein eL39 (rpl39e) from Methanocaldococcus jannaschii (strain ATCC 43067 / DSM 2661 / JAL-1 / JCM 10045 / NBRC 100440) (Methanococcus jannaschii).